The primary structure comprises 149 residues: Deoxyuridine 5'-triphosphate nucleotidohydrolase (149 aa).

Substrate contacts are provided by residues 68 to 70 (RSG), N81, 85 to 87 (TVD), and K95.

This sequence belongs to the dUTPase family. It depends on Mg(2+) as a cofactor.

The enzyme catalyses dUTP + H2O = dUMP + diphosphate + H(+). Its pathway is pyrimidine metabolism; dUMP biosynthesis; dUMP from dCTP (dUTP route): step 2/2. Its function is as follows. This enzyme is involved in nucleotide metabolism: it produces dUMP, the immediate precursor of thymidine nucleotides and it decreases the intracellular concentration of dUTP so that uracil cannot be incorporated into DNA. This is Deoxyuridine 5'-triphosphate nucleotidohydrolase from Neorickettsia sennetsu (strain ATCC VR-367 / Miyayama) (Ehrlichia sennetsu).